Reading from the N-terminus, the 581-residue chain is Proline--tRNA ligase (581 aa).

It belongs to the class-II aminoacyl-tRNA synthetase family. ProS type 1 subfamily. In terms of assembly, homodimer.

The protein localises to the cytoplasm. It carries out the reaction tRNA(Pro) + L-proline + ATP = L-prolyl-tRNA(Pro) + AMP + diphosphate. Its function is as follows. Catalyzes the attachment of proline to tRNA(Pro) in a two-step reaction: proline is first activated by ATP to form Pro-AMP and then transferred to the acceptor end of tRNA(Pro). As ProRS can inadvertently accommodate and process non-cognate amino acids such as alanine and cysteine, to avoid such errors it has two additional distinct editing activities against alanine. One activity is designated as 'pretransfer' editing and involves the tRNA(Pro)-independent hydrolysis of activated Ala-AMP. The other activity is designated 'posttransfer' editing and involves deacylation of mischarged Ala-tRNA(Pro). The misacylated Cys-tRNA(Pro) is not edited by ProRS. The sequence is that of Proline--tRNA ligase from Leptothrix cholodnii (strain ATCC 51168 / LMG 8142 / SP-6) (Leptothrix discophora (strain SP-6)).